The following is a 178-amino-acid chain: Large ribosomal subunit protein uL16 (178 aa).

This sequence belongs to the universal ribosomal protein uL16 family.

The sequence is that of Large ribosomal subunit protein uL16 from Saccharolobus solfataricus (strain ATCC 35092 / DSM 1617 / JCM 11322 / P2) (Sulfolobus solfataricus).